A 112-amino-acid polypeptide reads, in one-letter code: Larval cuticle protein III/IV (112 aa).

The N-terminal stretch at methionine 1–alanine 16 is a signal peptide. The region spanning proline 31–proline 92 is the Chitin-binding type R&amp;R domain.

Component of the larval cuticle. In Drosophila miranda (Fruit fly), this protein is Larval cuticle protein III/IV (Lcp3).